A 143-amino-acid polypeptide reads, in one-letter code: Small ribosomal subunit protein bS6 (143 aa).

Residues 96–143 are disordered; the sequence is VTEASPMAAAKEERRDDRREVKKDVAAAPVEAKEDSVEEKSEEAASEE. Over residues 105–143 the composition is skewed to basic and acidic residues; the sequence is AKEERRDDRREVKKDVAAAPVEAKEDSVEEKSEEAASEE.

This sequence belongs to the bacterial ribosomal protein bS6 family.

In terms of biological role, binds together with bS18 to 16S ribosomal RNA. This is Small ribosomal subunit protein bS6 from Colwellia psychrerythraea (strain 34H / ATCC BAA-681) (Vibrio psychroerythus).